A 152-amino-acid polypeptide reads, in one-letter code: Small ribosomal subunit protein uS13 (152 aa).

Serine 41 is subject to Phosphoserine.

Belongs to the universal ribosomal protein uS13 family.

It localises to the cytoplasm. Functionally, located at the top of the head of the 40S subunit, it contacts several helices of the 18S rRNA. This chain is Small ribosomal subunit protein uS13 (RpS18), found in Drosophila melanogaster (Fruit fly).